The sequence spans 198 residues: Na(+)-translocating NADH-quinone reductase subunit E (198 aa).

The next 6 membrane-spanning stretches (helical) occupy residues 11-31 (SVFI…FLAV), 35-55 (VSTS…AVPV), 77-97 (FLNF…LEMF), 110-130 (GIFL…SFMV), 140-160 (VVYG…LAGL), and 176-196 (LGIT…FSGI).

Belongs to the NqrDE/RnfAE family. Composed of six subunits; NqrA, NqrB, NqrC, NqrD, NqrE and NqrF.

The protein resides in the cell inner membrane. The catalysed reaction is a ubiquinone + n Na(+)(in) + NADH + H(+) = a ubiquinol + n Na(+)(out) + NAD(+). Its function is as follows. NQR complex catalyzes the reduction of ubiquinone-1 to ubiquinol by two successive reactions, coupled with the transport of Na(+) ions from the cytoplasm to the periplasm. NqrA to NqrE are probably involved in the second step, the conversion of ubisemiquinone to ubiquinol. The protein is Na(+)-translocating NADH-quinone reductase subunit E of Actinobacillus succinogenes (strain ATCC 55618 / DSM 22257 / CCUG 43843 / 130Z).